Reading from the N-terminus, the 456-residue chain is Trigger factor (456 aa).

The 86-residue stretch at 192 to 277 folds into the PPIase FKBP-type domain; the sequence is GDTVVIDFVG…IHEVKTKEVP (86 aa).

The protein belongs to the FKBP-type PPIase family. Tig subfamily.

It localises to the cytoplasm. The catalysed reaction is [protein]-peptidylproline (omega=180) = [protein]-peptidylproline (omega=0). Its function is as follows. Involved in protein export. Acts as a chaperone by maintaining the newly synthesized protein in an open conformation. Functions as a peptidyl-prolyl cis-trans isomerase. The polypeptide is Trigger factor (Streptococcus pyogenes serotype M4 (strain MGAS10750)).